Here is a 137-residue protein sequence, read N- to C-terminus: Nucleoside diphosphate kinase (137 aa).

ATP contacts are provided by Lys-10, Phe-59, Arg-87, Thr-93, Arg-104, and Asn-114. His-117 serves as the catalytic Pros-phosphohistidine intermediate.

Belongs to the NDK family. Homotetramer. Requires Mg(2+) as cofactor.

The protein resides in the cytoplasm. The enzyme catalyses a 2'-deoxyribonucleoside 5'-diphosphate + ATP = a 2'-deoxyribonucleoside 5'-triphosphate + ADP. It carries out the reaction a ribonucleoside 5'-diphosphate + ATP = a ribonucleoside 5'-triphosphate + ADP. Major role in the synthesis of nucleoside triphosphates other than ATP. The ATP gamma phosphate is transferred to the NDP beta phosphate via a ping-pong mechanism, using a phosphorylated active-site intermediate. The chain is Nucleoside diphosphate kinase from Streptomyces coelicolor (strain ATCC BAA-471 / A3(2) / M145).